Here is a 316-residue protein sequence, read N- to C-terminus: Ribosomal RNA small subunit methyltransferase H (316 aa).

S-adenosyl-L-methionine contacts are provided by residues 35 to 37 (GGH), Asp55, Tyr79, Asp100, and Gln107.

This sequence belongs to the methyltransferase superfamily. RsmH family.

The protein localises to the cytoplasm. It carries out the reaction cytidine(1402) in 16S rRNA + S-adenosyl-L-methionine = N(4)-methylcytidine(1402) in 16S rRNA + S-adenosyl-L-homocysteine + H(+). In terms of biological role, specifically methylates the N4 position of cytidine in position 1402 (C1402) of 16S rRNA. The protein is Ribosomal RNA small subunit methyltransferase H of Nitrosospira multiformis (strain ATCC 25196 / NCIMB 11849 / C 71).